Consider the following 668-residue polypeptide: DNA ligase (668 aa).

Residues 32–36, 81–82, and glutamate 111 each bind NAD(+); these read DAEYD and SL. Lysine 113 serves as the catalytic N6-AMP-lysine intermediate. The NAD(+) site is built by arginine 134, glutamate 171, lysine 290, and lysine 314. The Zn(2+) site is built by cysteine 408, cysteine 411, cysteine 426, and cysteine 432. Residues 591–668 enclose the BRCT domain; that stretch reads EEDLSLKGQT…DEEALIAILS (78 aa).

The protein belongs to the NAD-dependent DNA ligase family. LigA subfamily. The cofactor is Mg(2+). Mn(2+) serves as cofactor.

It catalyses the reaction NAD(+) + (deoxyribonucleotide)n-3'-hydroxyl + 5'-phospho-(deoxyribonucleotide)m = (deoxyribonucleotide)n+m + AMP + beta-nicotinamide D-nucleotide.. Functionally, DNA ligase that catalyzes the formation of phosphodiester linkages between 5'-phosphoryl and 3'-hydroxyl groups in double-stranded DNA using NAD as a coenzyme and as the energy source for the reaction. It is essential for DNA replication and repair of damaged DNA. In Shewanella pealeana (strain ATCC 700345 / ANG-SQ1), this protein is DNA ligase.